Reading from the N-terminus, the 245-residue chain is 1-(5-phosphoribosyl)-5-[(5-phosphoribosylamino)methylideneamino] imidazole-4-carboxamide isomerase (245 aa).

Asp-15 acts as the Proton acceptor in catalysis. Catalysis depends on Asp-135, which acts as the Proton donor.

It belongs to the HisA/HisF family.

It localises to the cytoplasm. The catalysed reaction is 1-(5-phospho-beta-D-ribosyl)-5-[(5-phospho-beta-D-ribosylamino)methylideneamino]imidazole-4-carboxamide = 5-[(5-phospho-1-deoxy-D-ribulos-1-ylimino)methylamino]-1-(5-phospho-beta-D-ribosyl)imidazole-4-carboxamide. It participates in amino-acid biosynthesis; L-histidine biosynthesis; L-histidine from 5-phospho-alpha-D-ribose 1-diphosphate: step 4/9. This chain is 1-(5-phosphoribosyl)-5-[(5-phosphoribosylamino)methylideneamino] imidazole-4-carboxamide isomerase, found in Haloquadratum walsbyi (strain DSM 16790 / HBSQ001).